Consider the following 1409-residue polypeptide: MKALLDLFRQVQQEEQFDAIKIGLASPEKIRSWSFGEVKKPETINYRTFKPERDGLFCAKIFGPIKDYECLCGKYKRLKHRGVICEKCGVEVTLAKVRRERMGHIELAAPTAHIWFLKSLPSRLGMVLDMTLRDIERVLYFEAFVVVEPGMTPLKKSQIMSEDDYLAKCDEYGEGEFVALMGAEGIRELLRGIDIEKQIETIRAELQATGSEAKIKKFAKRLKVLEAFQRSGIKPDWMILEVLPVLPPELRPLVPLDGGRFATSDLNDLYRRVINRNNRLKRLLELKAPEIIVRNEKRMLQEAVDSLLDNGRRGKAMTGANKRPLKSLAEMIKGKGGRFRQNLLGKRVDYSGRSVIVVGPTLKLHQCGLPKLMALELFKPFIFHKLETMGIATTIKAAKKEVESQTPVVWDILEEVIREHPVMLNRAPTLHRLGIQAFEPVLIEGKAIQLHPLVCAAFNADFDGDQMAVHVPLSLEAQMEARTLMLASNNVLFPANGDPSIVPSQDVVLGLYYTTRDKINGRGEGMTFADISEVIRAYENKEVELASRVNVRITEYDLVNPEADGDARFAPKITLQATTVGRAILSEILPKGLPFSVLNKPLKKKEISRLINTAFRKCGLRETVIFADKLLQSGFRLATRAGISIAIDDMLVPPAKEKIISEAAAKVKEYDKQYMSGLVTDQERYNNVVDIWGAAGDQVGKAMMEQLQTEDVVDRHGKTVKQESFNSIYMMADSGARGSAAQIRQLAGMRGLMAKPDGSIIETPITANFREGLNVLQYFISTHGARKGLADTALKTANSGYLTRRLVDVTQDLVVVEDDCGTSNGVAMKALVEGGEVIEALRDRILGRVVVNDVVNPETQETAIEAGTLLDEDLVELIDSIGVDEVKVRTPLTCDTRYGLCAKCYGRDLGRGVLVNSGEAVGVIAAQSIGEPGTQLTMRTFHIGGAASRAAVASSVEAKATGTVRFTATMRYVTNAKGEQIVISRSGEALITDDHGRERERHKIPYGATLLVHDGQSIKAGTQLATWDPLTRPIISEYSGTIKFENVEEGVTVAKQMDEVTGLSTLVVIDAKRRTSASKGIRPQVKLLDSSGAEVKIPGTDHSVTIGFQVGALITVKDGQQVHVGEVLARIPTESQKTRDITGGLPRVAELFEARSPKDAAVLAEVTGTTSFGKDTKGKQRLVITDLDGNAHEFLIAKEKQVLVHDGQVVNKGEMIVEGPADPHDILRLKGVEELATYIVDEVQDVYRLQGVKINDKHIEVIVRQMLRRVQIVDVGDTKFIPGEQVERSELLDENDKVIAEGKRPATYENLLLGITKASLSTDSFISAASFQETTRVLTEAAIMGKVDDLRGLKENVIVGRLIPAGTGLAYHRARKAKEAADRDRAAAIAEEEAASIFETPAVQQEGDA.

Residues C70, C72, C85, and C88 each coordinate Zn(2+). Residues D461, D463, and D465 each contribute to the Mg(2+) site. Zn(2+) contacts are provided by C820, C894, C901, and C904.

Belongs to the RNA polymerase beta' chain family. In terms of assembly, the RNAP catalytic core consists of 2 alpha, 1 beta, 1 beta' and 1 omega subunit. When a sigma factor is associated with the core the holoenzyme is formed, which can initiate transcription. It depends on Mg(2+) as a cofactor. The cofactor is Zn(2+).

It carries out the reaction RNA(n) + a ribonucleoside 5'-triphosphate = RNA(n+1) + diphosphate. Its function is as follows. DNA-dependent RNA polymerase catalyzes the transcription of DNA into RNA using the four ribonucleoside triphosphates as substrates. This chain is DNA-directed RNA polymerase subunit beta', found in Ralstonia nicotianae (strain ATCC BAA-1114 / GMI1000) (Ralstonia solanacearum).